The sequence spans 278 residues: Delta(3,5)-Delta(2,4)-dienoyl-CoA isomerase, peroxisomal (278 aa).

N-acetylmethionine is present on methionine 1. Substrate is bound by residues 69 to 73 (SGIDL) and glycine 128. A Microbody targeting signal motif is present at residues 276–278 (AKL).

It belongs to the enoyl-CoA hydratase/isomerase family. In terms of tissue distribution, expressed in roots, leaves, stems and flowers.

The protein localises to the peroxisome. The enzyme catalyses a (3E,5Z)-dienoyl-CoA = a (2E,4E)-(5,6-saturated)-dienoyl-CoA. It participates in lipid metabolism; fatty acid beta-oxidation. Functionally, converts 3,5-dienoyl-CoAs to the corresponding 2,4-dienoyl-CoAs. Involved in degradation of unsaturated fatty acids. This is Delta(3,5)-Delta(2,4)-dienoyl-CoA isomerase, peroxisomal from Arabidopsis thaliana (Mouse-ear cress).